A 301-amino-acid polypeptide reads, in one-letter code: Sulfate adenylyltransferase subunit 2 (301 aa).

Positions 279–301 are disordered; the sequence is RQGRMIDHDSSGSMEEKKKQGYF.

This sequence belongs to the PAPS reductase family. CysD subfamily. Heterodimer composed of CysD, the smaller subunit, and CysN.

The catalysed reaction is sulfate + ATP + H(+) = adenosine 5'-phosphosulfate + diphosphate. It functions in the pathway sulfur metabolism; hydrogen sulfide biosynthesis; sulfite from sulfate: step 1/3. With CysN forms the ATP sulfurylase (ATPS) that catalyzes the adenylation of sulfate producing adenosine 5'-phosphosulfate (APS) and diphosphate, the first enzymatic step in sulfur assimilation pathway. APS synthesis involves the formation of a high-energy phosphoric-sulfuric acid anhydride bond driven by GTP hydrolysis by CysN coupled to ATP hydrolysis by CysD. This chain is Sulfate adenylyltransferase subunit 2, found in Marinomonas sp. (strain MWYL1).